A 179-amino-acid polypeptide reads, in one-letter code: Dual-action ribosomal maturation protein DarP (179 aa).

It belongs to the DarP family.

It is found in the cytoplasm. Member of a network of 50S ribosomal subunit biogenesis factors which assembles along the 30S-50S interface, preventing incorrect 23S rRNA structures from forming. Promotes peptidyl transferase center (PTC) maturation. The protein is Dual-action ribosomal maturation protein DarP of Aliivibrio fischeri (strain ATCC 700601 / ES114) (Vibrio fischeri).